Reading from the N-terminus, the 1203-residue chain is DNA-directed RNA polymerase subunit beta' (1203 aa).

Residues C60, C62, C75, and C78 each coordinate Zn(2+). Mg(2+) contacts are provided by D449, D451, and D453. Zn(2+)-binding residues include C818, C892, C899, and C902.

This sequence belongs to the RNA polymerase beta' chain family. As to quaternary structure, the RNAP catalytic core consists of 2 alpha, 1 beta, 1 beta' and 1 omega subunit. When a sigma factor is associated with the core the holoenzyme is formed, which can initiate transcription. The cofactor is Mg(2+). Zn(2+) serves as cofactor.

It carries out the reaction RNA(n) + a ribonucleoside 5'-triphosphate = RNA(n+1) + diphosphate. In terms of biological role, DNA-dependent RNA polymerase catalyzes the transcription of DNA into RNA using the four ribonucleoside triphosphates as substrates. This is DNA-directed RNA polymerase subunit beta' from Bacillus thuringiensis (strain Al Hakam).